Here is a 170-residue protein sequence, read N- to C-terminus: Cytochrome b6-f complex subunit 4 (170 aa).

The next 3 helical transmembrane spans lie at 46 to 66, 105 to 125, and 141 to 161; these read LLFM…GLAV, LLGI…PFIE, and TVFL…TLPL.

This sequence belongs to the cytochrome b family. PetD subfamily. The 4 large subunits of the cytochrome b6-f complex are cytochrome b6, subunit IV (17 kDa polypeptide, PetD), cytochrome f and the Rieske protein, while the 4 small subunits are PetG, PetL, PetM and PetN. The complex functions as a dimer.

The protein resides in the cellular thylakoid membrane. Component of the cytochrome b6-f complex, which mediates electron transfer between photosystem II (PSII) and photosystem I (PSI), cyclic electron flow around PSI, and state transitions. The chain is Cytochrome b6-f complex subunit 4 from Synechococcus sp. (strain JA-3-3Ab) (Cyanobacteria bacterium Yellowstone A-Prime).